The sequence spans 200 residues: NADH-quinone oxidoreductase subunit C (200 aa).

The protein belongs to the complex I 30 kDa subunit family. As to quaternary structure, NDH-1 is composed of 14 different subunits. Subunits NuoB, C, D, E, F, and G constitute the peripheral sector of the complex.

It localises to the cell inner membrane. The enzyme catalyses a quinone + NADH + 5 H(+)(in) = a quinol + NAD(+) + 4 H(+)(out). NDH-1 shuttles electrons from NADH, via FMN and iron-sulfur (Fe-S) centers, to quinones in the respiratory chain. The immediate electron acceptor for the enzyme in this species is believed to be ubiquinone. Couples the redox reaction to proton translocation (for every two electrons transferred, four hydrogen ions are translocated across the cytoplasmic membrane), and thus conserves the redox energy in a proton gradient. The sequence is that of NADH-quinone oxidoreductase subunit C from Burkholderia mallei (strain NCTC 10247).